The following is a 421-amino-acid chain: Glucose-1-phosphate adenylyltransferase (421 aa).

Alpha-D-glucose 1-phosphate-binding positions include Tyr-109, Gly-175, Glu-190–Lys-191, and Ser-208.

Belongs to the bacterial/plant glucose-1-phosphate adenylyltransferase family. In terms of assembly, homotetramer.

The enzyme catalyses alpha-D-glucose 1-phosphate + ATP + H(+) = ADP-alpha-D-glucose + diphosphate. It participates in glycan biosynthesis; glycogen biosynthesis. In terms of biological role, involved in the biosynthesis of ADP-glucose, a building block required for the elongation reactions to produce glycogen. Catalyzes the reaction between ATP and alpha-D-glucose 1-phosphate (G1P) to produce pyrophosphate and ADP-Glc. In Teredinibacter turnerae (strain ATCC 39867 / T7901), this protein is Glucose-1-phosphate adenylyltransferase.